The primary structure comprises 66 residues: Beta-toxin Cb3 (66 aa).

The region spanning 1–66 (KEGYIVNYYD…VWPLPNKTCL (66 aa)) is the LCN-type CS-alpha/beta domain. Cystine bridges form between C12–C65, C16–C41, C25–C46, and C29–C48.

It belongs to the long (4 C-C) scorpion toxin superfamily. Sodium channel inhibitor family. Beta subfamily. Expressed by the venom gland.

The protein resides in the secreted. Its function is as follows. Beta toxins bind voltage-independently at site-4 of sodium channels (Nav) and reduces peak current and shifts the voltage of activation toward more negative potentials thereby affecting sodium channel activation and promoting spontaneous and repetitive firing. Has an inhibitory effect on voltage-gated sodium channels hNav1.1/SCN1A, hNav1.2/SCN2A, hNav1.4/SCN4A and hNav1.6/SCN8A. Reduces the peak current of hNav1.5/SCN5A but does not shift its voltage of activation. Also affects the inactivation processes of hNav1.1/SCN1A, hNav1.4/SCN4A, hNav1.5/SCN5A and hNav1.6/SCN8A. This toxin is active against mammals and lethal to mice. The chain is Beta-toxin Cb3 from Centruroides baergi (Scorpion).